A 446-amino-acid polypeptide reads, in one-letter code: Probable ribosomal RNA small subunit methyltransferase B (446 aa).

S-adenosyl-L-methionine contacts are provided by residues 260 to 266 (CAAPGGK), Asp-284, Asp-311, and Asp-330. The active-site Nucleophile is the Cys-383.

This sequence belongs to the class I-like SAM-binding methyltransferase superfamily. RsmB/NOP family.

The protein resides in the cytoplasm. The enzyme catalyses cytidine(967) in 16S rRNA + S-adenosyl-L-methionine = 5-methylcytidine(967) in 16S rRNA + S-adenosyl-L-homocysteine + H(+). Functionally, specifically methylates the cytosine at position 967 (m5C967) of 16S rRNA. This chain is Probable ribosomal RNA small subunit methyltransferase B, found in Synechocystis sp. (strain ATCC 27184 / PCC 6803 / Kazusa).